Consider the following 53-residue polypeptide: uncharacterized protein (53 aa).

This is an uncharacterized protein from Saccharomyces cerevisiae (strain ATCC 204508 / S288c) (Baker's yeast).